A 393-amino-acid chain; its full sequence is NAD(P)H-quinone oxidoreductase subunit H, chloroplastic (393 aa).

It belongs to the complex I 49 kDa subunit family. In terms of assembly, NDH is composed of at least 16 different subunits, 5 of which are encoded in the nucleus.

It localises to the plastid. It is found in the chloroplast thylakoid membrane. The enzyme catalyses a plastoquinone + NADH + (n+1) H(+)(in) = a plastoquinol + NAD(+) + n H(+)(out). It carries out the reaction a plastoquinone + NADPH + (n+1) H(+)(in) = a plastoquinol + NADP(+) + n H(+)(out). NDH shuttles electrons from NAD(P)H:plastoquinone, via FMN and iron-sulfur (Fe-S) centers, to quinones in the photosynthetic chain and possibly in a chloroplast respiratory chain. The immediate electron acceptor for the enzyme in this species is believed to be plastoquinone. Couples the redox reaction to proton translocation, and thus conserves the redox energy in a proton gradient. This chain is NAD(P)H-quinone oxidoreductase subunit H, chloroplastic, found in Pelargonium hortorum (Common geranium).